We begin with the raw amino-acid sequence, 566 residues long: Cyclin G (566 aa).

The region spanning M285–M368 is the Cyclin N-terminal domain.

It belongs to the cyclin family. Cyclin G subfamily. In terms of assembly, interacts with corto. Interacts with the cyclin-dependent kinases Cdk2 and Cdk4. Interacts with Brca2 and Rad9. Interacts with polycomb protein Asx. Interacts with protein phosphatase 2A subunit wdb.

The protein resides in the chromosome. Functionally, cyclin with roles in multiple processes including transcription, meiotic recombination repair, cell cycle regulation, and promotion of normal growth and metabolism. Binds to the promoter region of the homeobox gene Abd-B and is involved in maintaining Abd-B expression in the pupal epithelium. Involved in the transcriptional repression of the homeotic genes Scr and Ubx. Plays a role in meiotic recombination repair of DNA double-strand breaks which ensures efficient translation of grk and promotes grk activity in the oocyte, leading to oocyte dorso-ventral axis formation following secretion of grk from the oocyte and its binding to Egfr in the directly overlying follicle cells. Negatively regulates the binding of serine/threonine-protein kinase Akt1 to the protein phosphatase 2A subunit wdb, promoting normal growth and metabolism. Required for the formation of bilateral symmetry. Negatively regulates cell cycle progression by preventing G1 to S transition and retarding S-phase progression. This is Cyclin G from Drosophila melanogaster (Fruit fly).